A 235-amino-acid polypeptide reads, in one-letter code: Sugar fermentation stimulation protein homolog (235 aa).

It belongs to the SfsA family.

This chain is Sugar fermentation stimulation protein homolog, found in Alkaliphilus oremlandii (strain OhILAs) (Clostridium oremlandii (strain OhILAs)).